The chain runs to 930 residues: Protein translocase subunit SecA (930 aa).

ATP contacts are provided by residues Gln87, 105–109, and Asp516; that span reads GEGKT. Zn(2+) is bound by residues Cys914, Cys916, Cys925, and His926.

Belongs to the SecA family. In terms of assembly, monomer and homodimer. Part of the essential Sec protein translocation apparatus which comprises SecA, SecYEG and auxiliary proteins SecDF-YajC and YidC. It depends on Zn(2+) as a cofactor.

Its subcellular location is the cell inner membrane. The protein resides in the cytoplasm. It catalyses the reaction ATP + H2O + cellular proteinSide 1 = ADP + phosphate + cellular proteinSide 2.. Part of the Sec protein translocase complex. Interacts with the SecYEG preprotein conducting channel. Has a central role in coupling the hydrolysis of ATP to the transfer of proteins into and across the cell membrane, serving both as a receptor for the preprotein-SecB complex and as an ATP-driven molecular motor driving the stepwise translocation of polypeptide chains across the membrane. The protein is Protein translocase subunit SecA of Variovorax paradoxus (strain S110).